The chain runs to 347 residues: Dihydroorotase (347 aa).

H17 and H19 together coordinate Zn(2+). Residues 19 to 21 and N45 contribute to the substrate site; that span reads HVR. Zn(2+) contacts are provided by K102, H139, and H177. At K102 the chain carries N6-carboxylysine. Position 139 (H139) interacts with substrate. L222 serves as a coordination point for substrate. Residue D250 coordinates Zn(2+). D250 is an active-site residue. Residues H254 and A266 each contribute to the substrate site.

This sequence belongs to the metallo-dependent hydrolases superfamily. DHOase family. Class II DHOase subfamily. Homodimer. Requires Zn(2+) as cofactor.

It carries out the reaction (S)-dihydroorotate + H2O = N-carbamoyl-L-aspartate + H(+). It participates in pyrimidine metabolism; UMP biosynthesis via de novo pathway; (S)-dihydroorotate from bicarbonate: step 3/3. Catalyzes the reversible cyclization of carbamoyl aspartate to dihydroorotate. The chain is Dihydroorotase from Acidovorax sp. (strain JS42).